We begin with the raw amino-acid sequence, 352 residues long: Heat-inducible transcription repressor HrcA (352 aa).

It belongs to the HrcA family.

In terms of biological role, negative regulator of class I heat shock genes (grpE-dnaK-dnaJ and groELS operons). Prevents heat-shock induction of these operons. The sequence is that of Heat-inducible transcription repressor HrcA from Latilactobacillus sakei subsp. sakei (strain 23K) (Lactobacillus sakei subsp. sakei).